The sequence spans 269 residues: Tryptophan synthase alpha chain (269 aa).

Active-site proton acceptor residues include Glu-49 and Asp-60.

The protein belongs to the TrpA family. In terms of assembly, tetramer of two alpha and two beta chains.

The enzyme catalyses (1S,2R)-1-C-(indol-3-yl)glycerol 3-phosphate + L-serine = D-glyceraldehyde 3-phosphate + L-tryptophan + H2O. It functions in the pathway amino-acid biosynthesis; L-tryptophan biosynthesis; L-tryptophan from chorismate: step 5/5. Functionally, the alpha subunit is responsible for the aldol cleavage of indoleglycerol phosphate to indole and glyceraldehyde 3-phosphate. The polypeptide is Tryptophan synthase alpha chain (Salmonella arizonae (strain ATCC BAA-731 / CDC346-86 / RSK2980)).